We begin with the raw amino-acid sequence, 131 residues long: MSITYTTVGELKVGSYVVIDGEPCRVVEVTKAKTGKHGSAKANVVAIGVFSGAKKTLMAPVDQQVEVPIIEKHIGQIIADMGNKIQVMDLESYETFEIEKPTEDELASKIKPNAELEYWEIMGRRKIVRVK.

K36 is modified (hypusine).

The protein belongs to the eIF-5A family.

It localises to the cytoplasm. Its function is as follows. Functions by promoting the formation of the first peptide bond. This is Translation initiation factor 5A from Saccharolobus solfataricus (strain ATCC 35092 / DSM 1617 / JCM 11322 / P2) (Sulfolobus solfataricus).